Consider the following 203-residue polypeptide: Na(+)-translocating NADH-quinone reductase subunit E (203 aa).

The next 6 helical transmembrane spans lie at 11 to 31 (SIFI…FLAV), 35 to 55 (ISTA…TVPL), 82 to 102 (FLGL…LEMF), 115 to 135 (GIFL…LFMV), 145 to 165 (MVYG…MAGV), and 181 to 201 (LGIT…FSGI).

This sequence belongs to the NqrDE/RnfAE family. Composed of six subunits; NqrA, NqrB, NqrC, NqrD, NqrE and NqrF.

The protein localises to the cell inner membrane. It carries out the reaction a ubiquinone + n Na(+)(in) + NADH + H(+) = a ubiquinol + n Na(+)(out) + NAD(+). Functionally, NQR complex catalyzes the reduction of ubiquinone-1 to ubiquinol by two successive reactions, coupled with the transport of Na(+) ions from the cytoplasm to the periplasm. NqrA to NqrE are probably involved in the second step, the conversion of ubisemiquinone to ubiquinol. The protein is Na(+)-translocating NADH-quinone reductase subunit E of Dichelobacter nodosus (strain VCS1703A).